A 132-amino-acid polypeptide reads, in one-letter code: Ribosome-binding factor A (132 aa).

It belongs to the RbfA family. In terms of assembly, monomer. Binds 30S ribosomal subunits, but not 50S ribosomal subunits or 70S ribosomes.

Its subcellular location is the cytoplasm. In terms of biological role, one of several proteins that assist in the late maturation steps of the functional core of the 30S ribosomal subunit. Associates with free 30S ribosomal subunits (but not with 30S subunits that are part of 70S ribosomes or polysomes). Required for efficient processing of 16S rRNA. May interact with the 5'-terminal helix region of 16S rRNA. The polypeptide is Ribosome-binding factor A (Edwardsiella ictaluri (strain 93-146)).